The chain runs to 50 residues: Insulin (50 aa).

Disulfide bonds link Cys-7–Cys-36, Cys-19–Cys-49, and Cys-35–Cys-40.

Belongs to the insulin family. Heterodimer of a B chain and an A chain linked by two disulfide bonds.

The protein resides in the secreted. In terms of biological role, insulin decreases blood glucose concentration. It increases cell permeability to monosaccharides, amino acids and fatty acids. It accelerates glycolysis, the pentose phosphate cycle, and glycogen synthesis in liver. The sequence is that of Insulin (INS) from Proechimys guairae (Guaira spiny rat).